The primary structure comprises 492 residues: Probable malate:quinone oxidoreductase 1 (492 aa).

The protein belongs to the MQO family. FAD is required as a cofactor.

It carries out the reaction (S)-malate + a quinone = a quinol + oxaloacetate. It participates in carbohydrate metabolism; tricarboxylic acid cycle; oxaloacetate from (S)-malate (quinone route): step 1/1. In Staphylococcus epidermidis (strain ATCC 12228 / FDA PCI 1200), this protein is Probable malate:quinone oxidoreductase 1.